The chain runs to 114 residues: Iron-sulfur cluster insertion protein ErpA (114 aa).

Iron-sulfur cluster-binding residues include Cys42, Cys106, and Cys108.

Belongs to the HesB/IscA family. In terms of assembly, homodimer. Requires iron-sulfur cluster as cofactor.

Required for insertion of 4Fe-4S clusters for at least IspG. The protein is Iron-sulfur cluster insertion protein ErpA of Haemophilus influenzae (strain PittGG).